We begin with the raw amino-acid sequence, 207 residues long: DNA-directed RNA polymerase subunit alpha (207 aa).

Belongs to the RNA polymerase alpha chain family. In terms of assembly, in plastids the minimal PEP RNA polymerase catalytic core is composed of four subunits: alpha, beta, beta', and beta''. When a (nuclear-encoded) sigma factor is associated with the core the holoenzyme is formed, which can initiate transcription.

The protein resides in the plastid. Its subcellular location is the chloroplast. It carries out the reaction RNA(n) + a ribonucleoside 5'-triphosphate = RNA(n+1) + diphosphate. DNA-dependent RNA polymerase catalyzes the transcription of DNA into RNA using the four ribonucleoside triphosphates as substrates. This is DNA-directed RNA polymerase subunit alpha (rpoA) from Euglena anabaena (Euglenaria anabaena).